The sequence spans 657 residues: ER degradation-enhancing alpha-mannosidase-like protein 1 (657 aa).

Residues methionine 1–arginine 4 lie on the Cytoplasmic side of the membrane. A helical; Signal-anchor for type II membrane protein transmembrane segment spans residues alanine 5–phenylalanine 25. Topologically, residues glycine 26–isoleucine 657 are lumenal. The interval serine 48 to methionine 94 is disordered. 5 N-linked (GlcNAc...) asparagine glycosylation sites follow: asparagine 181, asparagine 198, asparagine 299, asparagine 342, and asparagine 624.

Belongs to the glycosyl hydrolase 47 family. As to quaternary structure, interacts with DNAJC10. Interacts with DERL2 and DERL3. Binds to SEL1L.

The protein resides in the endoplasmic reticulum membrane. Extracts misfolded glycoproteins, but not glycoproteins undergoing productive folding, from the calnexin cycle. It is directly involved in endoplasmic reticulum-associated degradation (ERAD) and targets misfolded glycoproteins for degradation in an N-glycan-independent manner, probably by forming a complex with SEL1L. It has low mannosidase activity, catalyzing mannose trimming from Man8GlcNAc2 to Man7GlcNAc2. The chain is ER degradation-enhancing alpha-mannosidase-like protein 1 (EDEM1) from Homo sapiens (Human).